A 380-amino-acid polypeptide reads, in one-letter code: Epoxyqueuosine reductase (380 aa).

D134 serves as the catalytic Proton donor. The region spanning P179 to Q208 is the 4Fe-4S ferredoxin-type 1 domain. [4Fe-4S] cluster-binding residues include C188, C191, C194, C198, C214, C240, C243, and C247. In terms of domain architecture, 4Fe-4S ferredoxin-type 2 spans P226 to H258.

It belongs to the QueG family. As to quaternary structure, monomer. The cofactor is cob(II)alamin. It depends on [4Fe-4S] cluster as a cofactor.

Its subcellular location is the cytoplasm. It carries out the reaction epoxyqueuosine(34) in tRNA + AH2 = queuosine(34) in tRNA + A + H2O. Its pathway is tRNA modification; tRNA-queuosine biosynthesis. In terms of biological role, catalyzes the conversion of epoxyqueuosine (oQ) to queuosine (Q), which is a hypermodified base found in the wobble positions of tRNA(Asp), tRNA(Asn), tRNA(His) and tRNA(Tyr). The protein is Epoxyqueuosine reductase of Bacillus anthracis.